The sequence spans 333 residues: Lipoyl synthase (333 aa).

Positions 1 to 29 are disordered; it reads MTDSASGASAVANIATPSNEPYDATRKQK. Cysteine 80, cysteine 85, cysteine 91, cysteine 106, cysteine 110, cysteine 113, and serine 320 together coordinate [4Fe-4S] cluster. Residues 91 to 309 form the Radical SAM core domain; the sequence is CFGKGTATFM…EEKAYEMGFT (219 aa).

This sequence belongs to the radical SAM superfamily. Lipoyl synthase family. It depends on [4Fe-4S] cluster as a cofactor.

Its subcellular location is the cytoplasm. It carries out the reaction [[Fe-S] cluster scaffold protein carrying a second [4Fe-4S](2+) cluster] + N(6)-octanoyl-L-lysyl-[protein] + 2 oxidized [2Fe-2S]-[ferredoxin] + 2 S-adenosyl-L-methionine + 4 H(+) = [[Fe-S] cluster scaffold protein] + N(6)-[(R)-dihydrolipoyl]-L-lysyl-[protein] + 4 Fe(3+) + 2 hydrogen sulfide + 2 5'-deoxyadenosine + 2 L-methionine + 2 reduced [2Fe-2S]-[ferredoxin]. It participates in protein modification; protein lipoylation via endogenous pathway; protein N(6)-(lipoyl)lysine from octanoyl-[acyl-carrier-protein]: step 2/2. Functionally, catalyzes the radical-mediated insertion of two sulfur atoms into the C-6 and C-8 positions of the octanoyl moiety bound to the lipoyl domains of lipoate-dependent enzymes, thereby converting the octanoylated domains into lipoylated derivatives. In Ralstonia nicotianae (strain ATCC BAA-1114 / GMI1000) (Ralstonia solanacearum), this protein is Lipoyl synthase.